We begin with the raw amino-acid sequence, 183 residues long: Pyruvoyl-dependent arginine decarboxylase 2 (183 aa).

Pyruvic acid (Ser) is present on Ser-41.

The protein belongs to the PdaD family. Pyruvate serves as cofactor.

It catalyses the reaction L-arginine + H(+) = agmatine + CO2. The sequence is that of Pyruvoyl-dependent arginine decarboxylase 2 (pdaD2) from Methanosarcina mazei (strain ATCC BAA-159 / DSM 3647 / Goe1 / Go1 / JCM 11833 / OCM 88) (Methanosarcina frisia).